Here is a 398-residue protein sequence, read N- to C-terminus: uncharacterized protein (398 aa).

The next 10 membrane-spanning stretches (helical) occupy residues Pro43–Leu65, Ile89–Ser108, Thr156–Leu173, Ile180–Val198, Leu224–Ala246, Ile259–Gly281, Ser291–Ile311, Leu316–Val338, Leu351–Trp373, and Thr380–Phe397.

Belongs to the major facilitator superfamily.

Its subcellular location is the cell membrane. This is an uncharacterized protein from Methanocaldococcus jannaschii (strain ATCC 43067 / DSM 2661 / JAL-1 / JCM 10045 / NBRC 100440) (Methanococcus jannaschii).